We begin with the raw amino-acid sequence, 212 residues long: ATP phosphoribosyltransferase 2 (212 aa).

Belongs to the ATP phosphoribosyltransferase family. Short subfamily. As to quaternary structure, heteromultimer composed of HisG and HisZ subunits.

The protein resides in the cytoplasm. It carries out the reaction 1-(5-phospho-beta-D-ribosyl)-ATP + diphosphate = 5-phospho-alpha-D-ribose 1-diphosphate + ATP. Its pathway is amino-acid biosynthesis; L-histidine biosynthesis; L-histidine from 5-phospho-alpha-D-ribose 1-diphosphate: step 1/9. In terms of biological role, catalyzes the condensation of ATP and 5-phosphoribose 1-diphosphate to form N'-(5'-phosphoribosyl)-ATP (PR-ATP). Has a crucial role in the pathway because the rate of histidine biosynthesis seems to be controlled primarily by regulation of HisG enzymatic activity. The chain is ATP phosphoribosyltransferase 2 (hisG2) from Geobacter sulfurreducens (strain ATCC 51573 / DSM 12127 / PCA).